The primary structure comprises 463 residues: MSLIVTRFAPSPTGYLHIGGLRTAIFNYLFARANQGKFFLRIEDTDLSRNSIEAANAIVEAFKWVGLEHDGEILYQSKRFEIYKEYIQKLLDEDKAYYCYMSKEELDALREEQKARKETPRYDNRYRDFKGTPPKGIEPVVRIKVPQNEVIGFNDGVKGEVKVNTNEIDDFIIARSDGTPTYNFVVTIDDALMGITDVIRGDDHLSNTPKQIVLYKALNFKIPNFFHVPMILNEEGQKLSKRHGATNVMDYQEMGYLKEALVNFLARLGWSYQDKEVFSMQELLEWFNPKDLNSSPSCFSWHKLNWLNAHYLKNQSVQELLKLLKPFSFSDLSHLNPAQLDRLLDALKERSQTLKELALKIDEVLTAPIEYEEKVFKKLNQALVMPLLEKFKLALDKTDFNDESALENAMHQIIEEEKIKAGHFMQPLRLALLGKGGGIGLKEALFILGKAESIKRIEEFLKN.

The short motif at 10 to 20 (PSPTGYLHIGG) is the 'HIGH' region element. The 'KMSKS' region signature appears at 238 to 242 (KLSKR). Residue Lys-241 coordinates ATP.

Belongs to the class-I aminoacyl-tRNA synthetase family. Glutamate--tRNA ligase type 1 subfamily. Monomer.

The protein resides in the cytoplasm. It carries out the reaction tRNA(Glu) + L-glutamate + ATP = L-glutamyl-tRNA(Glu) + AMP + diphosphate. Catalyzes the attachment of glutamate to tRNA(Glu) in a two-step reaction: glutamate is first activated by ATP to form Glu-AMP and then transferred to the acceptor end of tRNA(Glu). The chain is Glutamate--tRNA ligase 1 from Helicobacter pylori (strain J99 / ATCC 700824) (Campylobacter pylori J99).